The following is a 466-amino-acid chain: MADTASLRAPLCTEQFGSGAPRSCSAAADGSLQWDRAQRWGWFSRASITKPGQHEGGGRGPWAALTTLSGLRSVLLPQGFPDSVSPDYLQYQLWDSVQAFASSLSGSLATQAVLQGLGVGNAKASVSAATSTWLVKDSTGMLGRIIFAWWKGSKLDCNAKQWRLFADILNDTAMFLEIMAPMYPIFFTMTVSTSNLAKCIVGVAGGATRAALTMHQARRNNMADVSAKDSSQETVVNLAGLLVSLLMLPLVSDCLSLSLGCFILLTALHIYANYRAVRALVLETLNESRLQLVLKHFLQRGEVLEPASANQMEPLWTGFWPSLSLSLGVPLHHLVSSVSELKQLVEGHQEPYLLCWNQSQNQVQVALSQVAGPETVLRAATHGLILGALQEDGPLPGELAELRDMVQAGPKNESWILVRETHQVLDTLFPKFLKGLQAAGWKTEKHHLEVDEWRATWPLSPEKKVL.

Residue Ala-2 is modified to N-acetylalanine. Residues 245-265 (LLMLPLVSDCLSLSLGCFILL) traverse the membrane as a helical segment.

It belongs to the RUS1 family.

The protein localises to the membrane. This Rattus norvegicus (Rat) protein is RUS family member 1 (Rusf1).